The following is a 410-amino-acid chain: NADH-quinone oxidoreductase subunit H (410 aa).

A run of 9 helical transmembrane segments spans residues 16 to 36, 84 to 104, 124 to 144, 165 to 185, 198 to 218, 260 to 280, 288 to 308, 320 to 340, and 353 to 373; these read LILAKSLGVFVFLLLTVLAAI, WIYLAAPVISVIPAFMAFAVI, LPVAVLYILAVTSIGVYGIVL, VISYEIAMALSFVAVFIYAGT, VWFIFLLLPSFLVYLTSMVGE, VSALATTLFLGGWHAPWPISI, WWPLLWFTAKVWLFLFFFMWL, FMRLGWKLLIPVSLAWIAIVA, and WVTALIGVAGVAAILASLLAW. Positions 384–410 are disordered; sequence SHSPPAQSSDHGAFPVPPLPVKEPADA.

Belongs to the complex I subunit 1 family. In terms of assembly, NDH-1 is composed of 14 different subunits. Subunits NuoA, H, J, K, L, M, N constitute the membrane sector of the complex.

It is found in the cell membrane. It catalyses the reaction a quinone + NADH + 5 H(+)(in) = a quinol + NAD(+) + 4 H(+)(out). Its function is as follows. NDH-1 shuttles electrons from NADH, via FMN and iron-sulfur (Fe-S) centers, to quinones in the respiratory chain. The immediate electron acceptor for the enzyme in this species is believed to be menaquinone. Couples the redox reaction to proton translocation (for every two electrons transferred, four hydrogen ions are translocated across the cytoplasmic membrane), and thus conserves the redox energy in a proton gradient. The protein is NADH-quinone oxidoreductase subunit H of Mycolicibacterium gilvum (strain PYR-GCK) (Mycobacterium gilvum (strain PYR-GCK)).